A 123-amino-acid chain; its full sequence is Small ribosomal subunit protein uS12 (123 aa).

Residues 1–21 (MPTIEQLVRKGRQAKPKKSKT) are disordered. The segment covering 9–20 (RKGRQAKPKKSK) has biased composition (basic residues).

The protein belongs to the universal ribosomal protein uS12 family. As to quaternary structure, part of the 30S ribosomal subunit. Contacts proteins S8 and S17. May interact with IF1 in the 30S initiation complex.

Functionally, with S4 and S5 plays an important role in translational accuracy. In terms of biological role, interacts with and stabilizes bases of the 16S rRNA that are involved in tRNA selection in the A site and with the mRNA backbone. Located at the interface of the 30S and 50S subunits, it traverses the body of the 30S subunit contacting proteins on the other side and probably holding the rRNA structure together. The combined cluster of proteins S8, S12 and S17 appears to hold together the shoulder and platform of the 30S subunit. The chain is Small ribosomal subunit protein uS12 from Bifidobacterium longum (strain NCC 2705).